Reading from the N-terminus, the 876-residue chain is Alanine--tRNA ligase (876 aa).

Residue K74 is modified to N6-acetyllysine. Residues H564, H568, C666, and H670 each contribute to the Zn(2+) site.

The protein belongs to the class-II aminoacyl-tRNA synthetase family. In terms of assembly, homotetramer. It depends on Zn(2+) as a cofactor.

Its subcellular location is the cytoplasm. The enzyme catalyses tRNA(Ala) + L-alanine + ATP = L-alanyl-tRNA(Ala) + AMP + diphosphate. In terms of biological role, catalyzes the attachment of alanine to tRNA(Ala) in a two-step reaction: alanine is first activated by ATP to form Ala-AMP and then transferred to the acceptor end of tRNA(Ala). Also edits incorrectly charged Ser-tRNA(Ala) and Gly-tRNA(Ala) via its editing domain. The chain is Alanine--tRNA ligase from Escherichia coli O1:K1 / APEC.